A 134-amino-acid polypeptide reads, in one-letter code: Profilin-3 (134 aa).

A disulfide bond links C13 and C118. Residues 84-100 (AVIRGKKGSGGITIKKT) carry the Involved in PIP2 interaction motif. Phosphothreonine is present on T114.

It belongs to the profilin family. Occurs in many kinds of cells as a complex with monomeric actin in a 1:1 ratio. Post-translationally, phosphorylated by MAP kinases.

The protein resides in the cytoplasm. The protein localises to the cytoskeleton. In terms of biological role, binds to actin and affects the structure of the cytoskeleton. At high concentrations, profilin prevents the polymerization of actin, whereas it enhances it at low concentrations. The chain is Profilin-3 from Olea europaea (Common olive).